The sequence spans 198 residues: dTTP/UTP pyrophosphatase (198 aa).

Asp-75 functions as the Proton acceptor in the catalytic mechanism.

Belongs to the Maf family. YhdE subfamily. It depends on a divalent metal cation as a cofactor.

The protein localises to the cytoplasm. The catalysed reaction is dTTP + H2O = dTMP + diphosphate + H(+). It catalyses the reaction UTP + H2O = UMP + diphosphate + H(+). Functionally, nucleoside triphosphate pyrophosphatase that hydrolyzes dTTP and UTP. May have a dual role in cell division arrest and in preventing the incorporation of modified nucleotides into cellular nucleic acids. The protein is dTTP/UTP pyrophosphatase of Wolbachia sp. subsp. Drosophila simulans (strain wRi).